The sequence spans 140 residues: 3-hydroxyacyl-[acyl-carrier-protein] dehydratase FabZ (140 aa).

Histidine 48 is an active-site residue.

The protein belongs to the thioester dehydratase family. FabZ subfamily.

It is found in the cytoplasm. It catalyses the reaction a (3R)-hydroxyacyl-[ACP] = a (2E)-enoyl-[ACP] + H2O. Functionally, involved in unsaturated fatty acids biosynthesis. Catalyzes the dehydration of short chain beta-hydroxyacyl-ACPs and long chain saturated and unsaturated beta-hydroxyacyl-ACPs. This chain is 3-hydroxyacyl-[acyl-carrier-protein] dehydratase FabZ, found in Caldicellulosiruptor bescii (strain ATCC BAA-1888 / DSM 6725 / KCTC 15123 / Z-1320) (Anaerocellum thermophilum).